The following is a 341-amino-acid chain: Phosphate acyltransferase (341 aa).

The protein belongs to the PlsX family. In terms of assembly, homodimer. Probably interacts with PlsY.

It localises to the cytoplasm. It catalyses the reaction a fatty acyl-[ACP] + phosphate = an acyl phosphate + holo-[ACP]. The protein operates within lipid metabolism; phospholipid metabolism. Functionally, catalyzes the reversible formation of acyl-phosphate (acyl-PO(4)) from acyl-[acyl-carrier-protein] (acyl-ACP). This enzyme utilizes acyl-ACP as fatty acyl donor, but not acyl-CoA. This Photobacterium profundum (strain SS9) protein is Phosphate acyltransferase.